Consider the following 378-residue polypeptide: Mannitol-1-phosphate 5-dehydrogenase (378 aa).

Residue 4–15 (SVHFGAGNIGRG) coordinates NAD(+).

This sequence belongs to the mannitol dehydrogenase family.

The enzyme catalyses D-mannitol 1-phosphate + NAD(+) = beta-D-fructose 6-phosphate + NADH + H(+). The sequence is that of Mannitol-1-phosphate 5-dehydrogenase from Streptococcus pneumoniae (strain CGSP14).